The chain runs to 310 residues: Ribosomal RNA small subunit methyltransferase H (310 aa).

Residues 32 to 34 (AGH), Asp-52, Phe-79, Asp-100, and Gln-107 each bind S-adenosyl-L-methionine.

The protein belongs to the methyltransferase superfamily. RsmH family.

It is found in the cytoplasm. The enzyme catalyses cytidine(1402) in 16S rRNA + S-adenosyl-L-methionine = N(4)-methylcytidine(1402) in 16S rRNA + S-adenosyl-L-homocysteine + H(+). Its function is as follows. Specifically methylates the N4 position of cytidine in position 1402 (C1402) of 16S rRNA. In Halalkalibacterium halodurans (strain ATCC BAA-125 / DSM 18197 / FERM 7344 / JCM 9153 / C-125) (Bacillus halodurans), this protein is Ribosomal RNA small subunit methyltransferase H.